We begin with the raw amino-acid sequence, 1719 residues long: 5'-3' exoribonuclease 1 (1719 aa).

Basic and acidic residues predominate over residues histidine 1268–lysine 1298. The segment at histidine 1268–arginine 1317 is disordered. The segment covering cysteine 1301–glycine 1314 has biased composition (polar residues). Serine 1382 carries the phosphoserine modification. Residues isoleucine 1397–valine 1430 are compositionally biased toward basic and acidic residues. Disordered regions lie at residues isoleucine 1397 to glycine 1445 and glutamate 1634 to glutamate 1719. Over residues alanine 1638–threonine 1660 the composition is skewed to polar residues. A compositionally biased stretch (low complexity) spans proline 1661–serine 1680. Polar residues predominate over residues histidine 1681–valine 1690.

Belongs to the 5'-3' exonuclease family. Found in a mRNP complex with UPF1, UPF2, UPF3B and XRN1. Associates with alpha and beta tubulins. Interacts with DIS3L2. Interacts with ZC3HAV1 in an RNA-dependent manner. Interacts with ZFP36L1. Interacts with TRIM71 (via NHL repeats) in an RNA-dependent manner. Interacts with YTHDC2 (via ANK repeats). Interacts with DHX34; the interaction is RNA-independent. Expressed in heart, brain (spinal cord, dorsal root and superior cervical ganglia, neurons of the cerebrum and brain stem), peripheral nerve fibers in the skin and intestine, spleen, lung, liver, skeletal muscle, kidney and testis.

The protein resides in the cytoplasm. Major 5'-3' exoribonuclease involved in mRNA decay. Required for the 5'-3'-processing of the G4 tetraplex-containing DNA and RNA substrates. The kinetic of hydrolysis is faster for G4 RNA tetraplex than for G4 DNA tetraplex and monomeric RNA tetraplex. Binds to RNA and DNA. Plays a role in replication-dependent histone mRNA degradation. The sequence is that of 5'-3' exoribonuclease 1 from Mus musculus (Mouse).